Reading from the N-terminus, the 221-residue chain is Endo-1,4-beta-xylanase 11A (221 aa).

A signal peptide spans 1–18; sequence MKFATVLAFATAAGAAFA. The 198-residue stretch at 23 to 220 folds into the GH11 domain; that stretch reads SSETTEAGQL…GTGSASMSVS (198 aa). E111 (nucleophile) is an active-site residue. N117 carries an N-linked (GlcNAc...) asparagine glycan. E207 (proton donor) is an active-site residue.

It belongs to the glycosyl hydrolase 11 (cellulase G) family.

It localises to the secreted. The catalysed reaction is Endohydrolysis of (1-&gt;4)-beta-D-xylosidic linkages in xylans.. Its pathway is glycan degradation; xylan degradation. Functionally, endo-1,4-beta-xylanase involved in the hydrolysis of xylan, a major structural heterogeneous polysaccharide found in plant biomass representing the second most abundant polysaccharide in the biosphere, after cellulose. The polypeptide is Endo-1,4-beta-xylanase 11A (XYN11A) (Mycosarcoma maydis (Corn smut fungus)).